The primary structure comprises 704 residues: Elongation factor G (704 aa).

Positions 9 to 285 (AKVRNIGIMA…AIVAYLPSPL (277 aa)) constitute a tr-type G domain. Residues 18-25 (AHIDAGKT), 82-86 (DTPGH), and 136-139 (NKMD) contribute to the GTP site.

Belongs to the TRAFAC class translation factor GTPase superfamily. Classic translation factor GTPase family. EF-G/EF-2 subfamily.

Its subcellular location is the cytoplasm. In terms of biological role, catalyzes the GTP-dependent ribosomal translocation step during translation elongation. During this step, the ribosome changes from the pre-translocational (PRE) to the post-translocational (POST) state as the newly formed A-site-bound peptidyl-tRNA and P-site-bound deacylated tRNA move to the P and E sites, respectively. Catalyzes the coordinated movement of the two tRNA molecules, the mRNA and conformational changes in the ribosome. The polypeptide is Elongation factor G (Thermobifida fusca (strain YX)).